A 360-amino-acid chain; its full sequence is A-type ATP synthase subunit C (360 aa).

Positions 1–23 (MRLLERLWGKKPSRKSDKKKKGT) are disordered. Residues 9–22 (GKKPSRKSDKKKKG) are compositionally biased toward basic residues.

This sequence belongs to the V-ATPase V0D/AC39 subunit family. As to quaternary structure, has multiple subunits with at least A(3), B(3), C, D, E, F, H, I and proteolipid K(x).

Its subcellular location is the cell membrane. Component of the A-type ATP synthase that produces ATP from ADP in the presence of a proton gradient across the membrane. This chain is A-type ATP synthase subunit C, found in Methanosarcina acetivorans (strain ATCC 35395 / DSM 2834 / JCM 12185 / C2A).